The following is a 445-amino-acid chain: Phosphoglucosamine mutase (445 aa).

Catalysis depends on serine 102, which acts as the Phosphoserine intermediate. 4 residues coordinate Mg(2+): serine 102, aspartate 241, aspartate 243, and aspartate 245. Residue serine 102 is modified to Phosphoserine.

The protein belongs to the phosphohexose mutase family. The cofactor is Mg(2+). Post-translationally, activated by phosphorylation.

It carries out the reaction alpha-D-glucosamine 1-phosphate = D-glucosamine 6-phosphate. Its function is as follows. Catalyzes the conversion of glucosamine-6-phosphate to glucosamine-1-phosphate. The sequence is that of Phosphoglucosamine mutase from Rhodococcus erythropolis (strain PR4 / NBRC 100887).